Here is a 296-residue protein sequence, read N- to C-terminus: GTPase Era (296 aa).

The Era-type G domain occupies 7-174 (KCSMNAIVGT…INYLCEISPS (168 aa)). The interval 15-22 (GTTNAGKS) is G1. 15 to 22 (GTTNAGKS) contacts GTP. The G2 stretch occupies residues 41 to 45 (QTTRV). The tract at residues 62–65 (DTPG) is G3. Residues 62–66 (DTPGI) and 124–127 (NKID) each bind GTP. The interval 124-127 (NKID) is G4. Residues 153–155 (ISA) are G5. Residues 205-282 (LHHELPYSLS…HLFLFVKVRE (78 aa)) enclose the KH type-2 domain.

The protein belongs to the TRAFAC class TrmE-Era-EngA-EngB-Septin-like GTPase superfamily. Era GTPase family. Monomer.

Its subcellular location is the cytoplasm. The protein resides in the cell inner membrane. Functionally, an essential GTPase that binds both GDP and GTP, with rapid nucleotide exchange. Plays a role in 16S rRNA processing and 30S ribosomal subunit biogenesis and possibly also in cell cycle regulation and energy metabolism. The sequence is that of GTPase Era from Ehrlichia canis (strain Jake).